Here is a 223-residue protein sequence, read N- to C-terminus: Cytolethal distending toxin subunit A (223 aa).

An N-terminal signal peptide occupies residues 1–15; that stretch reads MKKFLPSLLLMGSVA. A lipid anchor (N-palmitoyl cysteine) is attached at cysteine 16. Cysteine 16 carries the S-diacylglycerol cysteine lipid modification. The interval 20–48 is disordered; that stretch reads QRMNDYSQPESQSDLAPKSSTIQPQPQPL. The mediates binding to target cells stretch occupies residues 91 to 102; that stretch reads WALAKRNWLWAY. The region spanning 123-212 is the Ricin B-type lectin domain; it reads HREYFRFVNQ…EPSRDQTWYL (90 aa).

As to quaternary structure, heterotrimer of 3 subunits, CdtA, CdtB and CdtC.

Its subcellular location is the cell outer membrane. In terms of biological role, CDTs are cytotoxins which induce host cell distension, growth arrest in G2/M phase, nucleus swelling, and chromatin fragmentation in HeLa cells. CdtA, along with CdtC, probably forms a heterodimeric subunit required for the delivery of CdtB. The protein is Cytolethal distending toxin subunit A (cdtA) of Haemophilus ducreyi (strain 35000HP / ATCC 700724).